A 65-amino-acid polypeptide reads, in one-letter code: Beta-toxin Am IT (65 aa).

Glu1 carries the post-translational modification Pyrrolidone carboxylic acid (Glu); partial. Positions 1-64 (EHGYLLDKYT…LWNYKTNKCK (64 aa)) constitute an LCN-type CS-alpha/beta domain. 4 cysteine pairs are disulfide-bonded: Cys12–Cys63, Cys16–Cys38, Cys23–Cys45, and Cys27–Cys47. Ser65 is modified (serine amide).

Belongs to the long (4 C-C) scorpion toxin superfamily. Sodium channel inhibitor family. As to expression, expressed by the venom gland.

It localises to the secreted. Functionally, has a toxic effect on insects and mammals. On German cockroach larvae, it provokes contraction, paralysis and lethality. Intracerebroventricular injection into mice causes severe neurotoxic symptoms. It fully competes with the binding of the iodinated Css4 (AC P60266) on rat brain synaptosomes, with moderate affinity and in a concentration-dependent manner (EC(50)=25 nM). It may act on both site 3 and site 4 of voltage-gated sodium channels. The sequence is that of Beta-toxin Am IT from Androctonus mauritanicus mauritanicus (Scorpion).